The primary structure comprises 291 residues: 4-hydroxy-tetrahydrodipicolinate synthase (291 aa).

Threonine 44 serves as a coordination point for pyruvate. Tyrosine 132 (proton donor/acceptor) is an active-site residue. Lysine 160 acts as the Schiff-base intermediate with substrate in catalysis. Isoleucine 202 is a pyruvate binding site.

The protein belongs to the DapA family. Homotetramer; dimer of dimers.

The protein resides in the cytoplasm. It catalyses the reaction L-aspartate 4-semialdehyde + pyruvate = (2S,4S)-4-hydroxy-2,3,4,5-tetrahydrodipicolinate + H2O + H(+). The protein operates within amino-acid biosynthesis; L-lysine biosynthesis via DAP pathway; (S)-tetrahydrodipicolinate from L-aspartate: step 3/4. In terms of biological role, catalyzes the condensation of (S)-aspartate-beta-semialdehyde [(S)-ASA] and pyruvate to 4-hydroxy-tetrahydrodipicolinate (HTPA). This is 4-hydroxy-tetrahydrodipicolinate synthase from Syntrophobacter fumaroxidans (strain DSM 10017 / MPOB).